A 590-amino-acid polypeptide reads, in one-letter code: UvrABC system protein C (590 aa).

Residues 15-98 form the GIY-YIG domain; the sequence is AEPGVYQFVA…VKRHQPRYNV (84 aa). Residues 207–242 enclose the UVR domain; it reads GALADPLRREMAAAAQAEAFERAANLRDRLAVVEGF.

It belongs to the UvrC family. In terms of assembly, interacts with UvrB in an incision complex.

Its subcellular location is the cytoplasm. In terms of biological role, the UvrABC repair system catalyzes the recognition and processing of DNA lesions. UvrC both incises the 5' and 3' sides of the lesion. The N-terminal half is responsible for the 3' incision and the C-terminal half is responsible for the 5' incision. This Halobacterium salinarum (strain ATCC 29341 / DSM 671 / R1) protein is UvrABC system protein C.